Here is a 253-residue protein sequence, read N- to C-terminus: Small ribosomal subunit protein uS3 (253 aa).

One can recognise a KH type-2 domain in the interval Leu21 to Ala92. The disordered stretch occupies residues Val211 to Ala253. Over residues Pro233–Ala253 the composition is skewed to pro residues.

It belongs to the universal ribosomal protein uS3 family.

It localises to the cytoplasm. The protein localises to the nucleus. The protein resides in the nucleolus. Its subcellular location is the mitochondrion inner membrane. It is found in the cytoskeleton. It localises to the spindle. The catalysed reaction is 2'-deoxyribonucleotide-(2'-deoxyribose 5'-phosphate)-2'-deoxyribonucleotide-DNA = a 3'-end 2'-deoxyribonucleotide-(2,3-dehydro-2,3-deoxyribose 5'-phosphate)-DNA + a 5'-end 5'-phospho-2'-deoxyribonucleoside-DNA + H(+). Its function is as follows. Component of the small ribosomal subunit. The ribosome is a large ribonucleoprotein complex responsible for the synthesis of proteins in the cell. Has endonuclease activity and plays a role in repair of damaged DNA. Also involved in other processes including regulation of transcription, translation of its cognate mRNA, spindle formation and chromosome movement during mitosis, and apoptosis. The polypeptide is Small ribosomal subunit protein uS3 (RPS3) (Ambystoma mexicanum (Axolotl)).